The sequence spans 453 residues: Presenilin-like protein At1g08700 (453 aa).

Residues Met1 to Ser8 lie on the Cytoplasmic side of the membrane. The chain crosses the membrane as a helical span at residues Leu9 to Leu29. At Leu30–Asn68 the chain is on the lumenal side. A helical membrane pass occupies residues Ala69–Tyr89. Over Asn90–Ala103 the chain is Cytoplasmic. Residues Phe104 to Ile124 traverse the membrane as a helical segment. Residues Pro125–Phe132 lie on the Lumenal side of the membrane. A helical membrane pass occupies residues Ile133–Ile153. Residues Val154 to Tyr159 lie on the Cytoplasmic side of the membrane. 2 consecutive transmembrane segments (helical) span residues Met160–Trp180 and Phe181–Leu201. Asp190 is a catalytic residue. Residues Lys202–Lys369 lie on the Cytoplasmic side of the membrane. Disordered regions lie at residues Val226–Val248 and Ile292–Ser329. A compositionally biased stretch (low complexity) spans Ser227–Arg240. Ser296 carries the phosphoserine modification. Residues Pro309 to Thr320 are compositionally biased toward polar residues. Residues Leu370–Leu390 form a helical membrane-spanning segment. Asp374 is a catalytic residue. The Lumenal portion of the chain corresponds to Met391–Thr392. A helical transmembrane segment spans residues Val393–Val413. At Tyr414–Ala417 the chain is on the cytoplasmic side. Positions Leu418–Leu438 form an intramembrane region, helical. A PAL motif is present at residues Pro419–Leu421. Over Met439 to Phe453 the chain is Cytoplasmic.

This sequence belongs to the peptidase A22A family. In terms of assembly, homodimer. Probable component of the gamma-secretase complex, a complex composed of a presenilin homodimer, nicastrin, APH1 and PEN2.

Its subcellular location is the endoplasmic reticulum membrane. It is found in the golgi apparatus membrane. Probable subunit of the gamma-secretase complex, an endoprotease complex that catalyzes the intramembrane cleavage of integral membrane proteins such as Notch receptors. This is Presenilin-like protein At1g08700 from Arabidopsis thaliana (Mouse-ear cress).